The primary structure comprises 130 residues: Putative pre-16S rRNA nuclease (130 aa).

It belongs to the YqgF nuclease family.

It localises to the cytoplasm. Its function is as follows. Could be a nuclease involved in processing of the 5'-end of pre-16S rRNA. The polypeptide is Putative pre-16S rRNA nuclease (Buchnera aphidicola subsp. Cinara cedri (strain Cc)).